The chain runs to 2841 residues: Neurofibromin (2841 aa).

Ala2 carries the post-translational modification N-acetylalanine. A phosphoserine mark is found at Ser866 and Ser878. In terms of domain architecture, Ras-GAP spans 1253 to 1484 (HLLYQLLWNM…DLARRFFLDI (232 aa)). One can recognise a CRAL-TRIO domain in the interval 1582–1740 (EKEEFKALKT…ATLALEEDLK (159 aa)). The segment at 1582 to 1839 (EKEEFKALKT…RTRWELSQPD (258 aa)) is lipid binding. Ser2190 and Ser2469 each carry phosphoserine. The residue at position 2516 (Thr2516) is a Phosphothreonine. Ser2517, Ser2523, Ser2525, and Ser2545 each carry phosphoserine. Residues 2557–2573 (KRQEMESGITTPPKMRR) carry the Bipartite nuclear localization signal motif. Thr2567 is modified (phosphothreonine). Ser2599, Ser2804, and Ser2819 each carry phosphoserine. The segment at 2786-2841 (SLATSQHSPGLDKENVELSPTAGHCNSGRTRHGSASQVQKQRSAGSFKRNSIKKIV) is disordered. Residues 2818-2829 (GSASQVQKQRSA) show a composition bias toward polar residues.

In terms of assembly, interacts with HTR6. Interacts with SPRED2. In terms of processing, ubiquitinated by RNF7/RBX2, leading to its degradation. As to expression, expressed predominantly in brain, spinal cord and testis. In terms of tissue distribution, expressed predominantly in adrenal gland, kidney, ovary and lung. Widely and more weakly expressed. Predominantly expressed in adrenal gland. As to expression, widely and more weakly expressed. Expressed mainly in testis.

The protein resides in the nucleus. It is found in the nucleolus. Its subcellular location is the cell membrane. Its function is as follows. Stimulates the GTPase activity of Ras. NF1 shows greater affinity for Ras GAP, but lower specific activity. May be a regulator of Ras activity. In Mus musculus (Mouse), this protein is Neurofibromin (Nf1).